Here is an 865-residue protein sequence, read N- to C-terminus: Bifunctional uridylyltransferase/uridylyl-removing enzyme (865 aa).

The interval 1 to 318 is uridylyltransferase; it reads MPHVDLNPLK…FPRPDSDARL (318 aa). The uridylyl-removing stretch occupies residues 319-675; it reads IDDDFRNLRE…VRPTEHGEGL (357 aa). Residues 437-559 enclose the HD domain; that stretch reads VDQHTLAVVR…VGDERRLAAL (123 aa). ACT domains follow at residues 676–762 and 789–865; these read QVMV…RLPH and RLSV…QQAA. Positions 747–767 are disordered; sequence DPHAARHAHAPRRLPHSHARR. Residues 751–767 are compositionally biased toward basic residues; that stretch reads ARHAHAPRRLPHSHARR.

It belongs to the GlnD family. The cofactor is Mg(2+).

It catalyses the reaction [protein-PII]-L-tyrosine + UTP = [protein-PII]-uridylyl-L-tyrosine + diphosphate. It carries out the reaction [protein-PII]-uridylyl-L-tyrosine + H2O = [protein-PII]-L-tyrosine + UMP + H(+). Its activity is regulated as follows. Uridylyltransferase (UTase) activity is inhibited by glutamine, while glutamine activates uridylyl-removing (UR) activity. In terms of biological role, modifies, by uridylylation and deuridylylation, the PII regulatory proteins (GlnB and homologs), in response to the nitrogen status of the cell that GlnD senses through the glutamine level. Under low glutamine levels, catalyzes the conversion of the PII proteins and UTP to PII-UMP and PPi, while under higher glutamine levels, GlnD hydrolyzes PII-UMP to PII and UMP (deuridylylation). Thus, controls uridylylation state and activity of the PII proteins, and plays an important role in the regulation of nitrogen assimilation and metabolism. This is Bifunctional uridylyltransferase/uridylyl-removing enzyme from Bordetella bronchiseptica (strain ATCC BAA-588 / NCTC 13252 / RB50) (Alcaligenes bronchisepticus).